A 494-amino-acid polypeptide reads, in one-letter code: Autocrine proliferation repressor protein A (494 aa).

A signal peptide spans 1–18 (MSKLLILLLLSLVASIFS). Residues N37, N153, and N302 are each glycosylated (N-linked (GlcNAc...) asparagine).

Belongs to the pqaA family. In terms of assembly, interacts with cfaD.

It is found in the secreted. Functionally, inhibitor that slows proliferation of secreting cells (also known as chalone). May function by binding to cell surface receptors. Requires cfaD for activity. Overexpression slows proliferation. The chain is Autocrine proliferation repressor protein A (aprA) from Dictyostelium discoideum (Social amoeba).